A 308-amino-acid polypeptide reads, in one-letter code: Autophagy-related protein 3 (308 aa).

Positions 83–159 (NFVETQTTET…NELADDDDDI (77 aa)) are flexible region. The tract at residues 89–121 (TTETRDVGDGWELEGQSEGERESGREDTKSNEE) is disordered. The segment covering 106–120 (EGERESGREDTKSNE) has biased composition (basic and acidic residues). Cysteine 235 acts as the Glycyl thioester intermediate in catalysis. Residues 239-283 (NVMKVLMEKVRASRHRARDTEAQKNAEEDWEDLQSDIDDGLRVDQ) form a handle region region.

Belongs to the ATG3 family. As to quaternary structure, monomer. Interacts with ATG8 through an intermediate thioester bond between Cys-235 and the C-terminal Gly of ATG8. Interacts with the C-terminal region of the E1-like ATG7 enzyme. Also interacts with the ATG12-ATG5 conjugate.

It is found in the cytoplasm. Functionally, E2 conjugating enzyme required for the cytoplasm to vacuole transport (Cvt) and autophagy. Required for selective autophagic degradation of the nucleus (nucleophagy) as well as for mitophagy which contributes to regulate mitochondrial quantity and quality by eliminating the mitochondria to a basal level to fulfill cellular energy requirements and preventing excess ROS production. Responsible for the E2-like covalent binding of phosphatidylethanolamine to the C-terminal Gly of ATG8. The ATG12-ATG5 conjugate plays a role of an E3 and promotes the transfer of ATG8 from ATG3 to phosphatidylethanolamine (PE). This step is required for the membrane association of ATG8. The formation of the ATG8-phosphatidylethanolamine conjugate is essential for autophagy and for the cytoplasm to vacuole transport (Cvt). The ATG8-PE conjugate mediates tethering between adjacent membranes and stimulates membrane hemifusion, leading to expansion of the autophagosomal membrane during autophagy. This chain is Autophagy-related protein 3, found in Kluyveromyces marxianus (strain DMKU3-1042 / BCC 29191 / NBRC 104275) (Yeast).